A 489-amino-acid chain; its full sequence is Cytochrome P450 2C70 (489 aa).

A signal peptide spans 1–27; sequence MALFIFLGIWLSCFLFLFLWNQHRGRG. A heme-binding site is contributed by Cys-434.

It belongs to the cytochrome P450 family. Heme is required as a cofactor. As to expression, expressed in liver.

Its subcellular location is the endoplasmic reticulum membrane. It is found in the microsome membrane. The enzyme catalyses chenodeoxycholate + reduced [NADPH--hemoprotein reductase] + O2 = alpha-muricholate + oxidized [NADPH--hemoprotein reductase] + H2O + H(+). The catalysed reaction is ursodeoxycholate + reduced [NADPH--hemoprotein reductase] + O2 = beta-muricholate + oxidized [NADPH--hemoprotein reductase] + H2O + H(+). In terms of biological role, a cytochrome P450 monooxygenase involved in muricholic acid (MCA) synthesis. Hydroxylates at the 6-beta position two major bile acids, chenodeoxycholic acid (CDCA) and ursodeoxycholic acid (UDCA) to form alpha-MCA and beta-MCA, respectively. May regulate NR1H4/farnesoid X receptor signaling, as taurine-conjugated MCAs are antagonists of NR1H4. Mechanistically, uses molecular oxygen inserting one oxygen atom into a substrate, and reducing the second into a water molecule, with two electrons provided by NADPH via cytochrome P450 reductase (CPR; NADPH-ferrihemoprotein reductase). The protein is Cytochrome P450 2C70 of Mus musculus (Mouse).